The primary structure comprises 59 residues: UPF0434 protein lpg1920 (59 aa).

The protein belongs to the UPF0434 family.

This chain is UPF0434 protein lpg1920, found in Legionella pneumophila subsp. pneumophila (strain Philadelphia 1 / ATCC 33152 / DSM 7513).